The sequence spans 165 residues: Growth arrest and DNA damage-inducible protein GADD45 alpha (165 aa).

Position 2 is a phosphothreonine (Thr-2).

It belongs to the GADD45 family. As to quaternary structure, interacts with MAPK14. Predominantly monomeric but also forms dimers and other oligomers as concentration increases. Interacts with GADD45GIP1. Interacts weakly with PCNA. Interacts with AURKA, likely to compete with dimerization.

The protein resides in the nucleus. Its function is as follows. In T-cells, functions as a regulator of p38 MAPKs by inhibiting p88 phosphorylation and activity. Might affect PCNA interaction with some CDK (cell division protein kinase) complexes; stimulates DNA excision repair in vitro and inhibits entry of cells into S phase. The protein is Growth arrest and DNA damage-inducible protein GADD45 alpha (GADD45A) of Homo sapiens (Human).